We begin with the raw amino-acid sequence, 263 residues long: MRMSCNGCRVLRKGCSEDCSIRPCLAWIKSPEAQANATVFLAKFYGRAGLMNLINAGPNHLRPGIFRSLLHEACGRIVNPIYGSVGLLWSGNWQLCQDAVEAVMKGEPVKEIATDAATIGQGPPLKIYDIRHISKDDNSAAAATGSTDLKLAKTRRAKRVSTVAIQAESEGKSDEASHDSSLSHQSEIVAAHEGESKESESNVSEVLAFSPPAVKGSGEIKLDLTLRLEPVSRAYHVVPVKKRRIGVFGTCQKESTCKTELML.

The 107-residue stretch at 3–109 (MSCNGCRVLR…VEAVMKGEPV (107 aa)) folds into the LOB domain. The disordered stretch occupies residues 162–204 (TVAIQAESEGKSDEASHDSSLSHQSEIVAAHEGESKESESNVS). Basic and acidic residues-rich tracts occupy residues 169–178 (SEGKSDEASH) and 190–200 (AAHEGESKESE).

It belongs to the LOB domain-containing protein family. In terms of tissue distribution, expressed in young shoots, roots, stems, leaves and flowers.

This Arabidopsis thaliana (Mouse-ear cress) protein is LOB domain-containing protein 41 (LBD41).